The primary structure comprises 171 residues: Superoxide dismutase [Cu-Zn] 2 (171 aa).

Residues Met1 to Ser20 form the signal peptide. Residues His67, His69, and His85 each contribute to the Cu cation site. Cys74 and Cys167 are disulfide-bonded. Residues His85, His93, His102, and Asp105 each coordinate Zn(2+). His147 is a Cu cation binding site.

It belongs to the Cu-Zn superoxide dismutase family. Cu cation is required as a cofactor. It depends on Zn(2+) as a cofactor.

The enzyme catalyses 2 superoxide + 2 H(+) = H2O2 + O2. In terms of biological role, destroys radicals which are normally produced within the cells and which are toxic to biological systems. The polypeptide is Superoxide dismutase [Cu-Zn] 2 (sodC2) (Aquifex aeolicus (strain VF5)).